Consider the following 176-residue polypeptide: Peptide methionine sulfoxide reductase B3 (176 aa).

An N-terminal signal peptide occupies residues 1–26 (MNIVNSKILFLSFTLLLLLQSSIVES). A MsrB domain is found at 51–172 (DEEWRAILSP…NSVSLKFTPA (122 aa)). Residues Cys-90, Cys-93, Cys-136, and Cys-139 each coordinate Zn(2+). Cys-108 and Cys-161 are oxidised to a cystine. The Nucleophile role is filled by Cys-161.

This sequence belongs to the MsrB Met sulfoxide reductase family. Requires Zn(2+) as cofactor.

It is found in the endoplasmic reticulum. It catalyses the reaction L-methionyl-[protein] + [thioredoxin]-disulfide + H2O = L-methionyl-(R)-S-oxide-[protein] + [thioredoxin]-dithiol. Catalyzes the reduction of methionine sulfoxide (MetSO) to methionine in proteins. Plays a protective role against oxidative stress by restoring activity to proteins that have been inactivated by methionine oxidation. Involved in cold tolerance. Eliminates MetSO and reactive oxygen species that accumulate at the ER during cold acclimation. MSRB family specifically reduces the MetSO R-enantiomer. In Arabidopsis thaliana (Mouse-ear cress), this protein is Peptide methionine sulfoxide reductase B3 (MSRB3).